The primary structure comprises 155 residues: Small ribosomal subunit protein uS7cz/uS7cy (155 aa).

Belongs to the universal ribosomal protein uS7 family. Part of the 30S ribosomal subunit.

It is found in the plastid. Its subcellular location is the chloroplast. One of the primary rRNA binding proteins, it binds directly to 16S rRNA where it nucleates assembly of the head domain of the 30S subunit. The polypeptide is Small ribosomal subunit protein uS7cz/uS7cy (rps7-A) (Amborella trichopoda).